Here is a 211-residue protein sequence, read N- to C-terminus: Phosphoheptose isomerase (211 aa).

Positions 50-211 constitute an SIS domain; the sequence is IAGTFEDGGK…VERMLGYCRL (162 aa). Substrate is bound at residue 65-67; that stretch reads NGG. Zn(2+) contacts are provided by histidine 74 and glutamate 78. Substrate-binding positions include glutamate 78, 109–110, 135–137, serine 140, and glutamine 188; these read ND and STS. Positions 188 and 196 each coordinate Zn(2+).

It belongs to the SIS family. GmhA subfamily. Zn(2+) serves as cofactor.

The protein localises to the cytoplasm. The catalysed reaction is 2 D-sedoheptulose 7-phosphate = D-glycero-alpha-D-manno-heptose 7-phosphate + D-glycero-beta-D-manno-heptose 7-phosphate. The protein operates within carbohydrate biosynthesis; D-glycero-D-manno-heptose 7-phosphate biosynthesis; D-glycero-alpha-D-manno-heptose 7-phosphate and D-glycero-beta-D-manno-heptose 7-phosphate from sedoheptulose 7-phosphate: step 1/1. Catalyzes the isomerization of sedoheptulose 7-phosphate in D-glycero-D-manno-heptose 7-phosphate. This chain is Phosphoheptose isomerase, found in Pelodictyon phaeoclathratiforme (strain DSM 5477 / BU-1).